The chain runs to 466 residues: Muscarinic acetylcholine receptor M2 (466 aa).

The Extracellular portion of the chain corresponds to 1–25; that stretch reads MNNSTYINSSSENVIALESPYKTIE. 3 N-linked (GlcNAc...) asparagine glycosylation sites follow: Asn-2, Asn-3, and Asn-8. Residues 26–48 form a helical membrane-spanning segment; sequence VVFIVLVAGSLSLVTIIGNILVM. The Cytoplasmic portion of the chain corresponds to 49 to 62; sequence VSIKVNRHLQTVNN. The chain crosses the membrane as a helical span at residues 63–83; it reads YFLFSLACADLIIGIFSMNLY. At 84 to 100 the chain is on the extracellular side; the sequence is TLYTVIGYWPLGPVVCD. Cysteines 99 and 179 form a disulfide. The helical transmembrane segment at 101–122 threads the bilayer; sequence LWLALDYVVSNASVMNLLIISF. The Important for signaling signature appears at 123-125; sequence DRY. The Cytoplasmic portion of the chain corresponds to 123 to 142; the sequence is DRYFCVTKPLTYPVKRTTKM. A helical membrane pass occupies residues 143–165; the sequence is AGMMIAAAWVLSFILWAPAILFW. Topologically, residues 166–187 are extracellular; sequence QFIVGGRTVPDKDCYIQFFSNP. The helical transmembrane segment at 188–212 threads the bilayer; sequence AVTFGTAIAAFYLPVIIMTVLYWQI. Residues 213 to 387 lie on the Cytoplasmic side of the membrane; it reads SRASKSRIKK…PPSREKKVTR (175 aa). Disordered stretches follow at residues 223–265 and 279–315; these read GKKE…KVQN and QGEE…SASQ. Polar residues-rich tracts occupy residues 228–238 and 246–256; these read AQNQDPVSPSL and PNNNNIPTSSD. The segment covering 287–298 has biased composition (low complexity); the sequence is NDSTSVSVVPSN. A helical transmembrane segment spans residues 388-410; sequence TILAILLAFIITWTPYNVMVLIN. Over 411-418 the chain is Extracellular; sequence SFCASCIP. The cysteines at positions 413 and 416 are disulfide-linked. Residues 419-442 traverse the membrane as a helical segment; that stretch reads GTVWTIGYWLCYINSTINPACYAL. Positions 436 to 440 match the Important for signaling motif; that stretch reads NPACY. Topologically, residues 443–466 are cytoplasmic; sequence CNATFKKTFKHLLMCHYKNIGATR. Phosphothreonine occurs at positions 446, 450, and 465.

Belongs to the G-protein coupled receptor 1 family. Muscarinic acetylcholine receptor subfamily. CHRM2 sub-subfamily.

It localises to the cell membrane. Its subcellular location is the postsynaptic cell membrane. In terms of biological role, the muscarinic acetylcholine receptor mediates various cellular responses, including inhibition of adenylate cyclase, breakdown of phosphoinositides and modulation of potassium channels through the action of G proteins. Primary transducing effect is adenylate cyclase inhibition. Signaling promotes phospholipase C activity, leading to the release of inositol trisphosphate (IP3); this then triggers calcium ion release into the cytosol. In Gallus gallus (Chicken), this protein is Muscarinic acetylcholine receptor M2 (CHRM2).